The following is a 782-amino-acid chain: Semaphorin-3G (782 aa).

The first 22 residues, Met1 to Ser22, serve as a signal peptide directing secretion. In terms of domain architecture, Sema spans Arg32–Leu519. An N-linked (GlcNAc...) asparagine glycan is attached at Asn44. Cys105 and Cys116 are joined by a disulfide. N-linked (GlcNAc...) asparagine glycosylation is present at Asn127. Intrachain disulfides connect Cys134-Cys143, Cys270-Cys382, Cys294-Cys342, Cys522-Cys540, and Cys603-Cys655. Residues Pro569–Leu671 form the Ig-like C2-type domain.

Belongs to the semaphorin family.

The protein localises to the secreted. In terms of biological role, has chemorepulsive activities for sympathetic axons. Ligand of NRP2. The protein is Semaphorin-3G (SEMA3G) of Homo sapiens (Human).